The following is a 362-amino-acid chain: MNAPKKLPADVAEELATTAQKLVQAGKGILAADESTQTIKKRFDNIKLENTIENRASYRDLLFGTKGLGKFISGAILFEETLFQKNEAGVPMVNLLHNENIIPGIKVDKGLVNIPCTDEEKSTQGLDGLAERCKEYYKAGARFAKWRTVLVIDTAKGKPTDLSNHETAWGLARYASICQQNRLVPIVEPEILADGPHSIEVCAVVTQKVLSCVFKALQENGVLLEGALLKPNMVTAGYECTAKTTTQDVGFLTVRTLRRTVPPALPGVVFLSGGQSEEEASVNLNSINALGPHPWALTFSYGRALQASVLNTWQGKKENVAKAREVLLQRAEANSLATYGKYKGGAGGENAGASLYEKKYVY.

Aspartate 33 serves as a coordination point for dihydroxyacetone phosphate. Residues serine 35 and threonine 38 each contribute to the D-glyceraldehyde 3-phosphate site. Arginine 42 provides a ligand contact to beta-D-fructose 1,6-bisphosphate. Position 106 (lysine 106) interacts with D-glyceraldehyde 3-phosphate. Lysine 145 is a binding site for dihydroxyacetone phosphate. Glutamate 188 is a D-glyceraldehyde 3-phosphate binding site. Catalysis depends on glutamate 188, which acts as the Proton acceptor. Lysine 230, serine 272, and glycine 273 together coordinate dihydroxyacetone phosphate. Lysine 230 (schiff-base intermediate with dihydroxyacetone phosphate) is an active-site residue. Beta-D-fructose 1,6-bisphosphate-binding positions include 272-274 (SGG) and serine 300. 2 residues coordinate dihydroxyacetone phosphate: glycine 302 and arginine 303. Arginine 303 contacts beta-D-fructose 1,6-bisphosphate.

Belongs to the class I fructose-bisphosphate aldolase family. As to quaternary structure, homotetramer. Interacts with TRAP (via cytoplasmic domain); the interaction prevents substrate binding and thereby inhibits aldolase activity. Interacts with MTRAP (via cytoplasmic domain); MTRAP phosphorylation may increase the binding to FBPA. Interact with RH1 (via cytoplasmic domain). Interacts with RH2b (via cytoplasmic domain). Interacts with RH4 (via cytoplasmic domain). Interacts with AMA1 (via cytoplasmic domain); the interaction is weak, however it may be increased upon AMA1 phosphorylation. Interacts with EBA140 (via cytoplasmic domain); the interaction is weak. Interacts with EBA175 (via cytoplasmic domain); the interaction is weak. Interacts with EBA181 (via cytoplasmic domain); the interaction is weak. Interacts with G-actin and F-actin. May interact with ACT2/actin II; the interaction inhibits FBPA catalytic activity. Interacts with human SLC4A1/band 3 (via N-terminus); the interaction inhibits FBPA catalytic activity.

It localises to the cytoplasm. Its subcellular location is the membrane. The protein localises to the host cell membrane. The catalysed reaction is beta-D-fructose 1,6-bisphosphate = D-glyceraldehyde 3-phosphate + dihydroxyacetone phosphate. It functions in the pathway carbohydrate degradation; glycolysis; D-glyceraldehyde 3-phosphate and glycerone phosphate from D-glucose: step 4/4. With respect to regulation, the cytoplasmic tail of TRAP and probably other adhesins acts as a competitive inhibitor as the binding sites of the glycolytic substrate fructose 1,6-bisphosphate and TRAP partially overlap. Inhibited by suramin, an antiparasitic drug used to treat Trypanosome-mediated infection. In terms of biological role, plays a key role in glycolysis by catalyzing the cleavage of fructose 1,6-bisphosphate into dihydroxyacetone phosphate and glyceraldehyde 3-phosphate. Independently of its catalytic activity, connects the actin filaments, and thus the actomyosin motor, to cell surface adhesins of the thrombospondin-related anonymous protein (TRAP), the erythrocyte binding ligand (EBL) and reticulocyte binding homolog (RH) protein families; this interaction is probably involved in transducing the motor force across the parasite surface required for sporozoite and ookinete gliding motility and merozoite invasion. Stimulates actin polymerisation. The protein is Fructose-bisphosphate aldolase of Plasmodium falciparum (isolate K1 / Thailand).